A 311-amino-acid chain; its full sequence is 4-diphosphocytidyl-2-C-methyl-D-erythritol kinase (311 aa).

Residue lysine 16 is part of the active site. ATP is bound at residue proline 100–serine 110. Aspartate 142 is a catalytic residue.

Belongs to the GHMP kinase family. IspE subfamily.

It carries out the reaction 4-CDP-2-C-methyl-D-erythritol + ATP = 4-CDP-2-C-methyl-D-erythritol 2-phosphate + ADP + H(+). It functions in the pathway isoprenoid biosynthesis; isopentenyl diphosphate biosynthesis via DXP pathway; isopentenyl diphosphate from 1-deoxy-D-xylulose 5-phosphate: step 3/6. In terms of biological role, catalyzes the phosphorylation of the position 2 hydroxy group of 4-diphosphocytidyl-2C-methyl-D-erythritol. The protein is 4-diphosphocytidyl-2-C-methyl-D-erythritol kinase of Prochlorococcus marinus (strain MIT 9312).